The following is an 855-amino-acid chain: Putative AAA family ATPase R476 (855 aa).

Over residues 1-13 (MNKRDFSELKNSE) the composition is skewed to basic and acidic residues. Residues 1–37 (MNKRDFSELKNSESSEESSLVSSTETVRSSKRNKKFH) are disordered. Residues 17–27 (ESSLVSSTETV) are compositionally biased toward low complexity. 610-617 (GPPGTGKT) is a binding site for ATP.

The protein belongs to the AAA ATPase family.

This chain is Putative AAA family ATPase R476, found in Acanthamoeba polyphaga mimivirus (APMV).